A 244-amino-acid chain; its full sequence is Lipoprotein-releasing system ATP-binding protein LolD (244 aa).

The ABC transporter domain maps to 19 to 244 (IRAEALAKTY…KLRELAPSAV (226 aa)). 55–62 (GASGAGKS) lines the ATP pocket.

The protein belongs to the ABC transporter superfamily. Lipoprotein translocase (TC 3.A.1.125) family. The complex is composed of two ATP-binding proteins (LolD) and two transmembrane proteins (LolC and LolE).

It is found in the cell inner membrane. Functionally, part of the ABC transporter complex LolCDE involved in the translocation of mature outer membrane-directed lipoproteins, from the inner membrane to the periplasmic chaperone, LolA. Responsible for the formation of the LolA-lipoprotein complex in an ATP-dependent manner. The sequence is that of Lipoprotein-releasing system ATP-binding protein LolD from Xanthomonas axonopodis pv. citri (strain 306).